A 159-amino-acid chain; its full sequence is Ribosome maturation factor RimP (159 aa).

It belongs to the RimP family.

It localises to the cytoplasm. Functionally, required for maturation of 30S ribosomal subunits. This is Ribosome maturation factor RimP from Halothermothrix orenii (strain H 168 / OCM 544 / DSM 9562).